Consider the following 306-residue polypeptide: F-box/LRR-repeat protein At3g26922 (306 aa).

The F-box domain occupies 13-73; sequence EDRISDLPEA…QSEDETYSEI (61 aa). LRR repeat units follow at residues 67–93, 98–122, 138–170, 171–196, 215–243, and 263–288; these read DETY…HLGF, CRSV…VLHV, CETL…RLEN, VDYK…VVYR, LTIY…KIDG, and IMNV…SLAL.

The chain is F-box/LRR-repeat protein At3g26922 from Arabidopsis thaliana (Mouse-ear cress).